The chain runs to 397 residues: Putative gustatory receptor 93c (397 aa).

The Cytoplasmic segment spans residues 1–12; it reads MIERLKKVSLPA. A helical transmembrane segment spans residues 13-33; the sequence is LSAFILFCSCHYGRILGVICF. Topologically, residues 34 to 87 are extracellular; sequence DIGQRTSDDSLVVRNRHQFKWFCLSCRLISVTAVCCFCAPYVADIEDPYERLLQ. A helical membrane pass occupies residues 88–108; sequence CFRLSASLICGICIIVVQVCY. Residues 109–141 lie on the Cytoplasmic side of the membrane; that stretch reads EKELLRMIISFLRLFRRVRRLSSLKRIGFGGKR. A helical membrane pass occupies residues 142-162; that stretch reads EFFLLLFKFICLVYELYSEIC. The Extracellular segment spans residues 163–179; that stretch reads QLWHLPDSLSLFATLCE. Residues 180–200 form a helical membrane-spanning segment; that stretch reads IFLEIGSLMIIHIGFVGYLSV. Topologically, residues 201 to 266 are cytoplasmic; it reads AALYSEVNSF…RTFHRLLELP (66 aa). The helical transmembrane segment at 267–287 threads the bilayer; sequence VLIILLGKIFATTILSYEVII. Over 288–295 the chain is Extracellular; it reads RPELYARK. A helical transmembrane segment spans residues 296 to 316; that stretch reads IGMWGLVVKSFADVILLTLAV. At 317–371 the chain is on the cytoplasmic side; it reads HEAVSSSRMMRRLSLENFPITDHKAWHMKWEMFLSRLNFFEFRVRPLGLFEVSNE. A helical transmembrane segment spans residues 372–392; it reads VILLFLSSMITYFTYVVQYGI. The Extracellular portion of the chain corresponds to 393–397; sequence QTNRL.

This sequence belongs to the insect chemoreceptor superfamily. Gustatory receptor (GR) family. Gr93a subfamily. In larvae, is expressed in neurons of the posterior pharyngeal sense organ.

Its subcellular location is the cell membrane. Its function is as follows. Probable gustatory receptor which mediates acceptance or avoidance behavior, depending on its substrates. The polypeptide is Putative gustatory receptor 93c (Gr93c) (Drosophila melanogaster (Fruit fly)).